A 353-amino-acid chain; its full sequence is 2,4-diaminopentanoate dehydrogenase (353 aa).

It belongs to the DapB family. As to quaternary structure, homodimer.

The catalysed reaction is (2R,4S)-2,4-diaminopentanoate + NAD(+) + H2O = (2R)-2-amino-4-oxopentanoate + NH4(+) + NADH + H(+). The enzyme catalyses (2R,4S)-2,4-diaminopentanoate + NADP(+) + H2O = (2R)-2-amino-4-oxopentanoate + NH4(+) + NADPH + H(+). Its activity is regulated as follows. Inhibited by p-chloromercuribenzoate, iodoacetate and N-ethylmaleimide. Functionally, involved in the ornithine fermentation pathway. Catalyzes the oxidative deamination of (2R,4S)-2,4-diaminopentanoate (DAP) to yield 2-amino-4-ketopentanoate (AKP). The polypeptide is 2,4-diaminopentanoate dehydrogenase (Acetoanaerobium sticklandii (strain ATCC 12662 / DSM 519 / JCM 1433 / CCUG 9281 / NCIMB 10654 / HF) (Clostridium sticklandii)).